The chain runs to 1730 residues: Meiosis regulator and mRNA stability factor 1 (1730 aa).

Serine 65 bears the Phosphoserine mark. Residues 352-489 (IGVFWDIENC…ALLHHANQLI (138 aa)) form the NYN domain. Residues 655-668 (MESKSGNRNSDHQQ) are compositionally biased toward basic and acidic residues. Residues 655–722 (MESKSGNRNS…VNSPVEKKKR (68 aa)) are disordered. A Phosphotyrosine modification is found at tyrosine 698. Residues 781 to 860 (VDIQVSNVDY…KKILVSLSTG (80 aa)) enclose the RRM domain. HTH OST-type domains lie at 865 to 939 (SLSL…SPLG) and 993 to 1069 (SLKV…HNKP). Phosphoserine occurs at positions 1081 and 1083. HTH OST-type domains are found at residues 1089-1163 (QLIQ…LTHR), 1165-1241 (QVKR…RKRE), 1249-1324 (RTKQ…TEVE), 1325-1400 (RFKA…INRK), 1401-1475 (SLRS…VKLT), and 1476-1550 (SLYL…LKND). A disordered region spans residues 1667–1714 (VQKGNLSCDSSPSSPAASPAPPGPSSEAPRPLFSKDAVESPAKKQPKN). Serine 1684 is subject to Phosphoserine.

In terms of assembly, interacts with LIMK2. In terms of tissue distribution, predominantly present in oocytes and barely detectable in granulosa cells (at protein level).

It is found in the peroxisome. Essential regulator of oogenesis required for female meiotic progression to repress transposable elements and preventing their mobilization, which is essential for the germline integrity. Probably acts via some RNA metabolic process, equivalent to the piRNA system in males, which mediates the repression of transposable elements during meiosis by forming complexes composed of RNAs and governs the methylation and subsequent repression of transposons. Also required to protect from DNA double-strand breaks. This Mus musculus (Mouse) protein is Meiosis regulator and mRNA stability factor 1 (Marf1).